The following is a 425-amino-acid chain: Adenylosuccinate synthetase (425 aa).

GTP contacts are provided by residues 12 to 18 (GDEGKGK) and 40 to 42 (GHT). The Proton acceptor role is filled by Asp13. Mg(2+) is bound by residues Asp13 and Gly40. IMP-binding positions include 13–16 (DEGK), 38–41 (NAGH), Thr127, Arg141, Gln222, Thr237, and Arg301. The active-site Proton donor is the His41. 297–303 (AVTGRPR) contributes to the substrate binding site. Residues Arg303, 329–331 (KID), and 411–413 (SVG) contribute to the GTP site.

This sequence belongs to the adenylosuccinate synthetase family. As to quaternary structure, homodimer. Mg(2+) is required as a cofactor.

Its subcellular location is the cytoplasm. It carries out the reaction IMP + L-aspartate + GTP = N(6)-(1,2-dicarboxyethyl)-AMP + GDP + phosphate + 2 H(+). It functions in the pathway purine metabolism; AMP biosynthesis via de novo pathway; AMP from IMP: step 1/2. Its function is as follows. Plays an important role in the de novo pathway of purine nucleotide biosynthesis. Catalyzes the first committed step in the biosynthesis of AMP from IMP. The polypeptide is Adenylosuccinate synthetase (Fusobacterium nucleatum).